The chain runs to 123 residues: Plasminogen (123 aa).

The region spanning 40-118 is the Kringle domain; it reads DCYHGNGQSY…RWEFCNLKKC (79 aa). 3 disulfide bridges follow: Cys41–Cys118, Cys62–Cys101, and Cys90–Cys113.

The protein belongs to the peptidase S1 family. Plasminogen subfamily. As to quaternary structure, interacts with CSPG4 and AMOT. Interacts (via the Kringle domains) with HRG; the interaction tethers PLG to the cell surface and enhances its activation. Interacts (via Kringle 4 domain) with ADA; the interaction stimulates PLG activation when in complex with DPP4. Angiostatin: Interacts with ATP5F1A; the interaction inhibits most of the angiogenic effects of angiostatin.

The protein resides in the secreted. The catalysed reaction is Preferential cleavage: Lys-|-Xaa &gt; Arg-|-Xaa, higher selectivity than trypsin. Converts fibrin into soluble products.. With respect to regulation, converted into plasmin by plasminogen activators, both plasminogen and its activator being bound to fibrin. Cannot be activated with streptokinase. Functionally, plasmin dissolves the fibrin of blood clots and acts as a proteolytic factor in a variety of other processes including embryonic development, tissue remodeling, tumor invasion, and inflammation. In ovulation, weakens the walls of the Graafian follicle. It activates the urokinase-type plasminogen activator, collagenases and several complement zymogens, such as C1, C4 and C5. Cleavage of fibronectin and laminin leads to cell detachment and apoptosis. Also cleaves fibrin, thrombospondin and von Willebrand factor. Its role in tissue remodeling and tumor invasion may be modulated by CSPG4. Binds to cells. The sequence is that of Plasminogen (PLG) from Capra hircus (Goat).